A 457-amino-acid polypeptide reads, in one-letter code: Bifunctional protein GlmU (457 aa).

The segment at 1–229 is pyrophosphorylase; that stretch reads MYNCAIILAA…YEEIMGVNSR (229 aa). UDP-N-acetyl-alpha-D-glucosamine is bound by residues 8-11, Lys22, Gln73, and 78-79; these read LAAG and GT. Asp103 is a Mg(2+) binding site. Gly140, Glu155, Asn170, and Asn227 together coordinate UDP-N-acetyl-alpha-D-glucosamine. Asn227 lines the Mg(2+) pocket. The tract at residues 230–250 is linker; the sequence is VQLSEAEIVMRKRINHKHMVN. The segment at 251–457 is N-acetyltransferase; the sequence is GVTFIDCEST…WLDKKGLLKK (207 aa). UDP-N-acetyl-alpha-D-glucosamine is bound by residues Arg332 and Lys350. His362 (proton acceptor) is an active-site residue. Residues Tyr365 and Asn376 each coordinate UDP-N-acetyl-alpha-D-glucosamine. Acetyl-CoA contacts are provided by residues 385 to 386, Ala422, and Arg439; that span reads NY.

It in the N-terminal section; belongs to the N-acetylglucosamine-1-phosphate uridyltransferase family. The protein in the C-terminal section; belongs to the transferase hexapeptide repeat family. As to quaternary structure, homotrimer. It depends on Mg(2+) as a cofactor.

The protein resides in the cytoplasm. It carries out the reaction alpha-D-glucosamine 1-phosphate + acetyl-CoA = N-acetyl-alpha-D-glucosamine 1-phosphate + CoA + H(+). The enzyme catalyses N-acetyl-alpha-D-glucosamine 1-phosphate + UTP + H(+) = UDP-N-acetyl-alpha-D-glucosamine + diphosphate. It participates in nucleotide-sugar biosynthesis; UDP-N-acetyl-alpha-D-glucosamine biosynthesis; N-acetyl-alpha-D-glucosamine 1-phosphate from alpha-D-glucosamine 6-phosphate (route II): step 2/2. The protein operates within nucleotide-sugar biosynthesis; UDP-N-acetyl-alpha-D-glucosamine biosynthesis; UDP-N-acetyl-alpha-D-glucosamine from N-acetyl-alpha-D-glucosamine 1-phosphate: step 1/1. It functions in the pathway bacterial outer membrane biogenesis; LPS lipid A biosynthesis. Functionally, catalyzes the last two sequential reactions in the de novo biosynthetic pathway for UDP-N-acetylglucosamine (UDP-GlcNAc). The C-terminal domain catalyzes the transfer of acetyl group from acetyl coenzyme A to glucosamine-1-phosphate (GlcN-1-P) to produce N-acetylglucosamine-1-phosphate (GlcNAc-1-P), which is converted into UDP-GlcNAc by the transfer of uridine 5-monophosphate (from uridine 5-triphosphate), a reaction catalyzed by the N-terminal domain. This is Bifunctional protein GlmU from Clostridium botulinum (strain Loch Maree / Type A3).